Consider the following 362-residue polypeptide: MQEEITTNREKIDLKNLSQDQLVEFAEKLGQPAFRGRQIMSWLYRPEVRDFEQMTDLAKVFRKLLAENSFFSHFDDPIIERAKDGCVKFGFRLHDGHVIETVLIPEPDRNTLCISSQVGCAMKCTFCMTGGMGFTRNLTPSEIVNQVCAARDFLANEPADKLIGPDRVTNVVYMGMGEPLNNLENVLTSISILTEQKGLDLTGRRITVSTCGIVANMARLGQEAPVNLAISLHAVDDKTRDMLMPVNNRYPLDELLEACRTYPMGKRRRIMFEYIMLAGINDSDTEARTLARKLQEIPCKINLIPYNESPGLPYKSPGMKRILSFQNILREANYSVFIRNSRGEDIAAACGQLATDETTKQS.

The Proton acceptor role is filled by E100. Positions 106–345 constitute a Radical SAM core domain; that stretch reads EPDRNTLCIS…VFIRNSRGED (240 aa). An intrachain disulfide couples C113 to C350. Positions 120, 124, and 127 each coordinate [4Fe-4S] cluster. S-adenosyl-L-methionine is bound by residues 177-178, S209, 231-233, and N307; these read GE and SLH. The active-site S-methylcysteine intermediate is C350.

The protein belongs to the radical SAM superfamily. RlmN family. Requires [4Fe-4S] cluster as cofactor.

The protein localises to the cytoplasm. It carries out the reaction adenosine(2503) in 23S rRNA + 2 reduced [2Fe-2S]-[ferredoxin] + 2 S-adenosyl-L-methionine = 2-methyladenosine(2503) in 23S rRNA + 5'-deoxyadenosine + L-methionine + 2 oxidized [2Fe-2S]-[ferredoxin] + S-adenosyl-L-homocysteine. It catalyses the reaction adenosine(37) in tRNA + 2 reduced [2Fe-2S]-[ferredoxin] + 2 S-adenosyl-L-methionine = 2-methyladenosine(37) in tRNA + 5'-deoxyadenosine + L-methionine + 2 oxidized [2Fe-2S]-[ferredoxin] + S-adenosyl-L-homocysteine. Specifically methylates position 2 of adenine 2503 in 23S rRNA and position 2 of adenine 37 in tRNAs. m2A2503 modification seems to play a crucial role in the proofreading step occurring at the peptidyl transferase center and thus would serve to optimize ribosomal fidelity. The chain is Dual-specificity RNA methyltransferase RlmN from Desulfotalea psychrophila (strain LSv54 / DSM 12343).